The chain runs to 90 residues: Evasin P1128 (90 aa).

An N-terminal signal peptide occupies residues 1–18 (MFIALGIQLFVAVTYAAG). Disulfide bonds link Cys29-Cys51, Cys33-Cys53, and Cys44-Cys64. Residue Asn32 is glycosylated (N-linked (GlcNAc...) asparagine).

It is found in the secreted. Its function is as follows. Salivary chemokine-binding protein which binds to host chemokines CXCL1, CXCL2, CXCL3, CXCL5 and CXCL8. The chain is Evasin P1128 from Ixodes ricinus (Common tick).